The following is a 945-amino-acid chain: MSELSSLFIKMAEKWQAKWAEARVYEPEPRPGAAKFFVTAAYPYPNGAIHIGHGRTYLIADVLARFHRHMGRVVLFPMGFHYTGTPILTIAEAIASGDATVIEEYMAIYGVPKDEIEKMGNPLYLARYFHEQSKRAMQKFGLGIDWTREFTTIDPEYQRFIQWQFEKLRERGLIVRGRHPVGWCPRHSMPVGAHDTKDDKEPEIGQWTLIYFADGEGLVFPAATLRPETVLGVTNMWINPDAEYAVIEHNGRKMVVSKDAAFRLSFQGDVRILREARGREFVGRSVQNPVTGEWVPVYEAKFVDPKVGTGVVMSVPAHAPYDYAALRDLNAVRLIPLIRVEGYGDYPAKEVVERMGIKSQTDPALEEATREVYSAEYTKGVMREDVVGRVGAHLSEPARSMLRAVFKMYFAGRPVREAREFISKWLVEAGIGGVMYDIMNKPVYCRCGTEIVVKVLEDQWFINYGEGRWKELARKLVEEMAIVPPEAKAHFLATIDWLDKRACARTRGLGTPLPWSDGWVIESLSDSTIYMAFYTVIKRIRQFGIKPEQLIKEFWDYVFLGVGTPEEVAKRTGVPPEQLKAIREEFDFWYPLDSRNSGKDLIPNHLTFFIFNHVAIFPREKWPRQIVANGWVLREGEKMSKSKRNVLPLDKAVDMYGPDPLRATLAITAEVEQDLDFRHAEAIRNAQQLMSIYSLAQRLAQTAEDRSPNWLDKWLVSEIALVLERAREAYEKVRVRQAAVEVLYNAKSVFDQYLASVERPSKLAVEAARAWAVAMEPIAPHLAEEIWSILGGEGLVVKAPWPQLRPDPVALLAKRYVDMVIDDVKRIPAFGEGVKRVVIYVNPNYAWVKAALSGDVKAVINAGAPPQAAKRVVDIVKTLGDELRGLISAVGKFDEAEALASYKNYMEKALGAPMEIYNADDPSAPDLGSKKKVALPLRPGIYIEK.

The short motif at 43–53 is the 'HIGH' region element; sequence PYPNGAIHIGH. The 'KMSKS' region motif lies at 638-642; that stretch reads KMSKS. ATP is bound at residue Lys641.

The protein belongs to the class-I aminoacyl-tRNA synthetase family.

Its subcellular location is the cytoplasm. The catalysed reaction is tRNA(Leu) + L-leucine + ATP = L-leucyl-tRNA(Leu) + AMP + diphosphate. The chain is Leucine--tRNA ligase from Pyrobaculum aerophilum (strain ATCC 51768 / DSM 7523 / JCM 9630 / CIP 104966 / NBRC 100827 / IM2).